The sequence spans 319 residues: Cytochrome f (319 aa).

The first 35 residues, 1–35, serve as a signal peptide directing secretion; that stretch reads MQKKDVCEYITKWVSVTISTLVTIGVLVFPLSSEA. 4 residues coordinate heme: Y36, C56, C59, and H60. Residues 285-305 traverse the membrane as a helical segment; the sequence is IQGLLVFFASVVLAQIFLVLK.

It belongs to the cytochrome f family. In terms of assembly, the 4 large subunits of the cytochrome b6-f complex are cytochrome b6, subunit IV (17 kDa polypeptide, petD), cytochrome f and the Rieske protein, while the 4 small subunits are PetG, PetL, PetM and PetN. The complex functions as a dimer. It depends on heme as a cofactor.

It is found in the plastid. Its subcellular location is the chloroplast thylakoid membrane. Functionally, component of the cytochrome b6-f complex, which mediates electron transfer between photosystem II (PSII) and photosystem I (PSI), cyclic electron flow around PSI, and state transitions. This chain is Cytochrome f, found in Zygnema circumcarinatum (Green alga).